The primary structure comprises 796 residues: Lon protease 2 (796 aa).

One can recognise a Lon N-terminal domain in the interval 9–206 (LPIVILKENV…KLIVNLSIEI (198 aa)). An ATP-binding site is contributed by 352–359 (GPPGIGKT). The region spanning 617-796 (IDSSGFVYGL…EEVFDYLNII (180 aa)) is the Lon proteolytic domain. Active-site residues include S702 and K745.

It belongs to the peptidase S16 family. Homohexamer. Organized in a ring with a central cavity.

Its subcellular location is the cytoplasm. The catalysed reaction is Hydrolysis of proteins in presence of ATP.. ATP-dependent serine protease that mediates the selective degradation of mutant and abnormal proteins as well as certain short-lived regulatory proteins. Required for cellular homeostasis and for survival from DNA damage and developmental changes induced by stress. Degrades polypeptides processively to yield small peptide fragments that are 5 to 10 amino acids long. Binds to DNA in a double-stranded, site-specific manner. This Borreliella burgdorferi (strain ATCC 35210 / DSM 4680 / CIP 102532 / B31) (Borrelia burgdorferi) protein is Lon protease 2 (lon2).